We begin with the raw amino-acid sequence, 922 residues long: Probable outer membrane protein pmp1 (922 aa).

Residues 1–26 (MRFSLCGFPLVFSFTLLSVFDTSLSA) form the signal peptide. Positions 620–922 (SLQTDRGLWI…NINCGSKFRF (303 aa)) constitute an Autotransporter domain.

It belongs to the PMP outer membrane protein family.

Its subcellular location is the secreted. It is found in the cell wall. The protein resides in the cell outer membrane. This chain is Probable outer membrane protein pmp1 (pmp1), found in Chlamydia pneumoniae (Chlamydophila pneumoniae).